The chain runs to 423 residues: Serine hydroxymethyltransferase (423 aa).

(6S)-5,6,7,8-tetrahydrofolate-binding positions include leucine 120 and 124–126; that span reads GHL. Residue lysine 229 is modified to N6-(pyridoxal phosphate)lysine. Residue 353–355 coordinates (6S)-5,6,7,8-tetrahydrofolate; it reads SPF.

Belongs to the SHMT family. In terms of assembly, homodimer. It depends on pyridoxal 5'-phosphate as a cofactor.

It is found in the cytoplasm. The catalysed reaction is (6R)-5,10-methylene-5,6,7,8-tetrahydrofolate + glycine + H2O = (6S)-5,6,7,8-tetrahydrofolate + L-serine. Its pathway is one-carbon metabolism; tetrahydrofolate interconversion. It functions in the pathway amino-acid biosynthesis; glycine biosynthesis; glycine from L-serine: step 1/1. In terms of biological role, catalyzes the reversible interconversion of serine and glycine with tetrahydrofolate (THF) serving as the one-carbon carrier. This reaction serves as the major source of one-carbon groups required for the biosynthesis of purines, thymidylate, methionine, and other important biomolecules. Also exhibits THF-independent aldolase activity toward beta-hydroxyamino acids, producing glycine and aldehydes, via a retro-aldol mechanism. The sequence is that of Serine hydroxymethyltransferase from Synechococcus sp. (strain RCC307).